Consider the following 206-residue polypeptide: LexA repressor (206 aa).

Residues 28–48 (RAEIARRLGFKSANAAEEHLK) constitute a DNA-binding region (H-T-H motif). Residues Ser123 and Lys160 each act as for autocatalytic cleavage activity in the active site.

Belongs to the peptidase S24 family. In terms of assembly, homodimer.

It catalyses the reaction Hydrolysis of Ala-|-Gly bond in repressor LexA.. In terms of biological role, represses a number of genes involved in the response to DNA damage (SOS response), including recA and lexA. In the presence of single-stranded DNA, RecA interacts with LexA causing an autocatalytic cleavage which disrupts the DNA-binding part of LexA, leading to derepression of the SOS regulon and eventually DNA repair. The chain is LexA repressor from Shewanella pealeana (strain ATCC 700345 / ANG-SQ1).